A 357-amino-acid polypeptide reads, in one-letter code: 4-hydroxymandelate oxidase (357 aa).

Residues 1–357 (MTYVSLADLE…RRLNTKLGVV (357 aa)) enclose the FMN hydroxy acid dehydrogenase domain. Gln-126 contacts FMN. Tyr-128 is a binding site for a 2-oxocarboxylate. FMN is bound at residue Thr-154. Residue Arg-163 coordinates a 2-oxocarboxylate. Residue Lys-228 participates in FMN binding. The Proton acceptor role is filled by His-252. Arg-255 provides a ligand contact to a 2-oxocarboxylate. FMN contacts are provided by residues 283-287 (DGGIR) and 306-307 (GR).

This sequence belongs to the FMN-dependent alpha-hydroxy acid dehydrogenase family. FMN is required as a cofactor.

The catalysed reaction is (S)-4-hydroxymandelate + O2 = 4-hydroxyphenylglyoxylate + H2O2. The protein operates within antibiotic biosynthesis; vancomycin biosynthesis. In terms of biological role, catalyzes the oxidation of p-hydroxymandelate to p-hydroxybenzoylformate in the biosynthesis of L-(4-hydroxyphenyl)glycine and L-(3,5-dihydroxyphenyl)glycine, 2 non-proteinogenic amino acids occurring in the vancomycin group of antibiotics. This Amycolatopsis orientalis (Nocardia orientalis) protein is 4-hydroxymandelate oxidase (hmo).